Reading from the N-terminus, the 1449-residue chain is uncharacterized protein (1449 aa).

Positions 1–13 (MELRSDASHKENV) are enriched in basic and acidic residues. Disordered regions lie at residues 1-32 (MELR…RRSL), 123-201 (SNLS…LRSW), 258-298 (APQE…RRRR), 315-437 (LSDS…NKAQ), 523-551 (KQVQ…LGRS), 1257-1278 (DQGP…SKAH), and 1399-1449 (RLAA…QLQL). Over residues 123 to 133 (SNLSINETSSP) the composition is skewed to polar residues. 2 stretches are compositionally biased toward polar residues: residues 315-333 (LSDS…TLGT) and 384-394 (PCSSAFSNTAW). Basic and acidic residues predominate over residues 400 to 419 (QKGEEGAPRERVHREEERTA). Residues 426–437 (VPASSASKNKAQ) are compositionally biased toward polar residues. The segment covering 1258-1270 (QGPRAHSSPEPRA) has biased composition (basic and acidic residues).

This is an uncharacterized protein from Homo sapiens (Human).